We begin with the raw amino-acid sequence, 463 residues long: Trigger factor (463 aa).

Positions 162–243 (GDHVSIDLSA…VHSVKLKELP (82 aa)) constitute a PPIase FKBP-type domain. Polar residues predominate over residues 427–444 (SGNTIEPPTPVHTETITV). The segment at 427 to 463 (SGNTIEPPTPVHTETITVASGDEETEESAAEQGETEK) is disordered.

It belongs to the FKBP-type PPIase family. Tig subfamily.

It is found in the cytoplasm. The enzyme catalyses [protein]-peptidylproline (omega=180) = [protein]-peptidylproline (omega=0). Involved in protein export. Acts as a chaperone by maintaining the newly synthesized protein in an open conformation. Functions as a peptidyl-prolyl cis-trans isomerase. The protein is Trigger factor of Thermobifida fusca (strain YX).